Here is a 148-residue protein sequence, read N- to C-terminus: Lysozyme C, non-stomach isozyme (148 aa).

The N-terminal stretch at 1–18 is a signal peptide; the sequence is MKALLILGLLLFSVAVQG. In terms of domain architecture, C-type lysozyme spans 19-148; that stretch reads KVFERCELAR…LTSYIQGCGV (130 aa). 4 disulfides stabilise this stretch: Cys-24–Cys-146, Cys-48–Cys-134, Cys-83–Cys-99, and Cys-95–Cys-113. Residues Glu-53 and Asp-71 contribute to the active site.

The protein belongs to the glycosyl hydrolase 22 family. In terms of tissue distribution, expressed in blood cells.

The catalysed reaction is Hydrolysis of (1-&gt;4)-beta-linkages between N-acetylmuramic acid and N-acetyl-D-glucosamine residues in a peptidoglycan and between N-acetyl-D-glucosamine residues in chitodextrins.. Lysozymes have primarily a bacteriolytic function; those in tissues and body fluids are associated with the monocyte-macrophage system and enhance the activity of immunoagents. In Bos taurus (Bovine), this protein is Lysozyme C, non-stomach isozyme (LYS).